Consider the following 208-residue polypeptide: Uracil phosphoribosyltransferase (208 aa).

5-phospho-alpha-D-ribose 1-diphosphate is bound by residues R78, R103, and 130–138; that span reads DPMLATGGS. Residues I193 and 198 to 200 contribute to the uracil site; that span reads GDA. D199 is a 5-phospho-alpha-D-ribose 1-diphosphate binding site.

The protein belongs to the UPRTase family. It depends on Mg(2+) as a cofactor.

The enzyme catalyses UMP + diphosphate = 5-phospho-alpha-D-ribose 1-diphosphate + uracil. The protein operates within pyrimidine metabolism; UMP biosynthesis via salvage pathway; UMP from uracil: step 1/1. Its activity is regulated as follows. Allosterically activated by GTP. In terms of biological role, catalyzes the conversion of uracil and 5-phospho-alpha-D-ribose 1-diphosphate (PRPP) to UMP and diphosphate. This Shewanella putrefaciens (strain CN-32 / ATCC BAA-453) protein is Uracil phosphoribosyltransferase.